A 237-amino-acid chain; its full sequence is Putative N-acetylmannosamine-6-phosphate 2-epimerase (237 aa).

The protein belongs to the NanE family.

The enzyme catalyses an N-acyl-D-glucosamine 6-phosphate = an N-acyl-D-mannosamine 6-phosphate. The protein operates within amino-sugar metabolism; N-acetylneuraminate degradation; D-fructose 6-phosphate from N-acetylneuraminate: step 3/5. Functionally, converts N-acetylmannosamine-6-phosphate (ManNAc-6-P) to N-acetylglucosamine-6-phosphate (GlcNAc-6-P). This Listeria monocytogenes serovar 1/2a (strain ATCC BAA-679 / EGD-e) protein is Putative N-acetylmannosamine-6-phosphate 2-epimerase.